Reading from the N-terminus, the 99-residue chain is DNA-binding protein Fis (99 aa).

Positions 75–94 form a DNA-binding region, H-T-H motif; the sequence is QTRAASIMGINRSTLRKKLK.

This sequence belongs to the transcriptional regulatory Fis family. In terms of assembly, homodimer.

In terms of biological role, activates ribosomal RNA transcription. Plays a direct role in upstream activation of rRNA promoters. This chain is DNA-binding protein Fis, found in Buchnera aphidicola subsp. Schizaphis graminum (strain Sg).